We begin with the raw amino-acid sequence, 463 residues long: A-type ATP synthase subunit B (463 aa).

It belongs to the ATPase alpha/beta chains family. In terms of assembly, has multiple subunits with at least A(3), B(3), C, D, E, F, H, I and proteolipid K(x).

It localises to the cell membrane. In terms of biological role, component of the A-type ATP synthase that produces ATP from ADP in the presence of a proton gradient across the membrane. The B chain is a regulatory subunit. This Thermococcus sp. (strain KI) protein is A-type ATP synthase subunit B.